The sequence spans 202 residues: Neuroligin-3 (202 aa).

Over 1–202 (RYGSPTYFYA…TGTRMQGHSW (202 aa)) the chain is Extracellular. A disulfide bridge connects residues Cys15 and Cys49. Asn50 carries an N-linked (GlcNAc...) asparagine glycan. The disordered stretch occupies residues 154-202 (LRIPPTAPTSPAGPMARPGAPSGQPSHLPTATRMPRGPGTGTRMQGHSW).

It belongs to the type-B carboxylesterase/lipase family. In terms of assembly, homodimer, and heterodimer with NLGN1 and NLGN2. Interacts with neurexins NRXN1, NRXN2 and NRXN3. Interaction with neurexins is mediated by heparan sulfate glycan modification on neurexin. Interacts (via its C-terminus) with DLG4/PSD-95 (via PDZ domain 3).

Its subcellular location is the cell membrane. The protein resides in the synapse. In terms of biological role, cell surface protein involved in cell-cell-interactions via its interactions with neurexin family members. Plays a role in synapse function and synaptic signal transmission, and probably mediates its effects by recruiting and clustering other synaptic proteins. May promote the initial formation of synapses, but is not essential for this. May also play a role in glia-glia or glia-neuron interactions in the developing peripheral nervous system. In Macaca mulatta (Rhesus macaque), this protein is Neuroligin-3 (NLGN3).